A 245-amino-acid polypeptide reads, in one-letter code: 8-amino-3,8-dideoxy-manno-octulosonate cytidylyltransferase (245 aa).

This sequence belongs to the KdsB family.

Its subcellular location is the cytoplasm. The catalysed reaction is 8-amino-3,8-dideoxy-alpha-D-manno-octulosonate + CTP = CMP-8-amino-3,8-dideoxy-alpha-D-manno-oct-2-ulosonate + diphosphate. Its pathway is bacterial outer membrane biogenesis; lipopolysaccharide biosynthesis. Activates KDO8N (a required 8-carbon sugar) for incorporation into bacterial lipopolysaccharide in the Shewanella genus. The chain is 8-amino-3,8-dideoxy-manno-octulosonate cytidylyltransferase from Shewanella sediminis (strain HAW-EB3).